The chain runs to 334 residues: Nucleoid-associated protein YPN_2714 (334 aa).

It belongs to the YejK family.

The protein resides in the cytoplasm. Its subcellular location is the nucleoid. The polypeptide is Nucleoid-associated protein YPN_2714 (Yersinia pestis bv. Antiqua (strain Nepal516)).